The chain runs to 276 residues: Large ribosomal subunit protein uL2 (276 aa).

A disordered region spans residues 219–276 (TVRGSAMNPNDHPHGGGEGRTSIGRPAPVTPWGKPALGYKTRDSKKASNKMIVSRRKK).

This sequence belongs to the universal ribosomal protein uL2 family. In terms of assembly, part of the 50S ribosomal subunit. Forms a bridge to the 30S subunit in the 70S ribosome.

Its function is as follows. One of the primary rRNA binding proteins. Required for association of the 30S and 50S subunits to form the 70S ribosome, for tRNA binding and peptide bond formation. It has been suggested to have peptidyltransferase activity; this is somewhat controversial. Makes several contacts with the 16S rRNA in the 70S ribosome. The polypeptide is Large ribosomal subunit protein uL2 (Alkaliphilus oremlandii (strain OhILAs) (Clostridium oremlandii (strain OhILAs))).